A 25-amino-acid chain; its full sequence is Small ribosomal subunit protein eS32 (25 aa).

Residues 1-25 form a disordered region; it reads MRDKWRKKRVRRLKRKRRKVRARSK.

Belongs to the eukaryotic ribosomal protein eS32 family. As to quaternary structure, component of the small ribosomal subunit. Mature ribosomes consist of a small (40S) and a large (60S) subunit. The 40S subunit contains about 32 different proteins and 1 molecule of RNA (18S). The 60S subunit contains 45 different proteins and 3 molecules of RNA (25S, 5.8S and 5S).

It localises to the cytoplasm. Its function is as follows. Component of the ribosome, a large ribonucleoprotein complex responsible for the synthesis of proteins in the cell. The small ribosomal subunit (SSU) binds messenger RNAs (mRNAs) and translates the encoded message by selecting cognate aminoacyl-transfer RNA (tRNA) molecules. The large subunit (LSU) contains the ribosomal catalytic site termed the peptidyl transferase center (PTC), which catalyzes the formation of peptide bonds, thereby polymerizing the amino acids delivered by tRNAs into a polypeptide chain. The nascent polypeptides leave the ribosome through a tunnel in the LSU and interact with protein factors that function in enzymatic processing, targeting, and the membrane insertion of nascent chains at the exit of the ribosomal tunnel. The chain is Small ribosomal subunit protein eS32 from Candida albicans (strain SC5314 / ATCC MYA-2876) (Yeast).